Here is a 377-residue protein sequence, read N- to C-terminus: Protein FAM199X-B (377 aa).

Residues 240 to 254 (KEHSPRQRCTRESWK) show a composition bias toward basic and acidic residues. Residues 240–350 (KEHSPRQRCT…EQRQARKERI (111 aa)) are disordered. Low complexity predominate over residues 256 to 301 (TSYSTASTSGVSGASVSSSSASMVSTASSTGSSGGNSASNSSANMS). Positions 319–338 (DSKKRSKQRKLQQKALRKRQ) are enriched in basic residues. Residues 321 to 349 (KKRSKQRKLQQKALRKRQLKEQRQARKER) are a coiled coil. A compositionally biased stretch (basic and acidic residues) spans 339-350 (LKEQRQARKERI).

It belongs to the FAM199 family.

The protein is Protein FAM199X-B (fam199x-b) of Xenopus laevis (African clawed frog).